The chain runs to 261 residues: Transmembrane protein 187 (261 aa).

Transmembrane regions (helical) follow at residues 8–28, 43–63, 88–108, 113–133, 140–162, and 190–210; these read AFVH…TGIF, APVA…VNMA, VFAA…WTQW, VLDQ…CLYL, WLFL…HPQG, and SATY…LKLC.

Ubiquitous.

The protein resides in the membrane. The sequence is that of Transmembrane protein 187 (TMEM187) from Homo sapiens (Human).